Reading from the N-terminus, the 352-residue chain is Alanine racemase (352 aa).

K33 (proton acceptor; specific for D-alanine) is an active-site residue. K33 is modified (N6-(pyridoxal phosphate)lysine). R129 contributes to the substrate binding site. Y250 (proton acceptor; specific for L-alanine) is an active-site residue. M298 contacts substrate.

It belongs to the alanine racemase family. The cofactor is pyridoxal 5'-phosphate.

It catalyses the reaction L-alanine = D-alanine. The protein operates within amino-acid biosynthesis; D-alanine biosynthesis; D-alanine from L-alanine: step 1/1. In terms of biological role, catalyzes the interconversion of L-alanine and D-alanine. May also act on other amino acids. This Neisseria gonorrhoeae (strain ATCC 700825 / FA 1090) protein is Alanine racemase (alr).